Consider the following 886-residue polypeptide: Peptidyl-lysine N-acetyltransferase Pat (886 aa).

Residues 487 to 523 (QPILHAYGLHTLPTWIASDSAEAVHIAEQIGYPVALK) form the ATP-grasp domain. ATP is bound at residue 513-524 (AEQIGYPVALKL). In terms of domain architecture, N-acetyltransferase spans 726 to 881 (CLFRPILPED…GIVGLTLNLA (156 aa)).

The protein in the N-terminal section; belongs to the acetate CoA ligase alpha subunit family. It in the central section; belongs to the acetate CoA ligase beta subunit family. As to quaternary structure, monomer in the absence of acetyl-CoA. Oligomerizes to a tetrameric form in the presence of acetyl-CoA.

The enzyme catalyses L-lysyl-[protein] + acetyl-CoA = N(6)-acetyl-L-lysyl-[protein] + CoA + H(+). Exhibits positive cooperativity. It may be the result of acetyl-CoA binding to two distinct sites, or the result of subunit interactions. In terms of biological role, acetylates and inactivates the acetyl-CoA synthase (Acs). Can also acetylate other central metabolic enzymes in response to environmental changes. The sequence is that of Peptidyl-lysine N-acetyltransferase Pat (pat) from Salmonella typhimurium (strain LT2 / SGSC1412 / ATCC 700720).